Consider the following 1123-residue polypeptide: Ubiquitin carboxyl-terminal hydrolase 36 (1123 aa).

Composition is skewed to basic and acidic residues over residues Met1–Ala19 and Gly69–Tyr90. Disordered regions lie at residues Met1–Gly22 and Thr67–Asp95. Residues Ala122–Ile423 enclose the USP domain. Cys131 (nucleophile) is an active-site residue. His382 functions as the Proton acceptor in the catalytic mechanism. A phosphoserine mark is found at Ser429 and Ser464. A disordered region spans residues Pro430–Val577. Polar residues predominate over residues Arg491–Gly503. The span at Pro510–Ser519 shows a compositional bias: low complexity. Position 546 is a phosphoserine (Ser546). The span at Ser557 to Ser571 shows a compositional bias: low complexity. Phosphoserine is present on Ser582. Residues Ala589 to Asn999 are disordered. A compositionally biased stretch (basic and acidic residues) spans Lys597–Gly609. The span at Ser610 to Ser623 shows a compositional bias: low complexity. Residues Ser640–Pro654 show a composition bias toward polar residues. Ser667 is modified (phosphoserine). Residues Val669–Met681 are compositionally biased toward polar residues. Position 682 is a phosphoserine (Ser682). The segment covering Lys687–Ser697 has biased composition (low complexity). Residues Ser713 and Ser742 each carry the phosphoserine modification. A compositionally biased stretch (polar residues) spans Glu773–Pro785. Basic residues predominate over residues His841 to Lys850. Residues Gly891 to Gly902 are compositionally biased toward polar residues. Position 952 is a phosphoserine (Ser952). The span at Gln963–Leu975 shows a compositional bias: basic and acidic residues.

Belongs to the peptidase C19 family. As to quaternary structure, interacts with isoform 3 of FBXW7; the interaction inhibits MYC degradation induced by SCF(FBW7) complex. Interacts with NTRK1; USP36 does not deubiquitinate NTRK1. Interacts with NEDD4L (via domains WW1, 3 and 4); the interaction inhibits ubiquitination of, at least, NTRK1, KCNQ2 and KCNQ3 by NEDD4L. Interacts (via C-terminus) with EXOSC10 (via C-terminus); the interaction is facilitated by the association with RNA and promotes sumoylation of EXOSC10. Post-translationally, polyubiquitinated by NEDD4L, no effect on USP36 protein levels. Both proteins interact with and regulate each other's ubiquitination levels. As to expression, broadly expressed.

The protein localises to the nucleus. The protein resides in the nucleolus. It is found in the cytoplasm. The catalysed reaction is Thiol-dependent hydrolysis of ester, thioester, amide, peptide and isopeptide bonds formed by the C-terminal Gly of ubiquitin (a 76-residue protein attached to proteins as an intracellular targeting signal).. Functionally, deubiquitinase essential for the regulation of nucleolar structure and function. Required for cell and organism viability. Plays an important role in ribosomal RNA processing and protein synthesis, which is mediated, at least in part, through deubiquitination of DHX33, NPM1 and FBL, regulating their protein stability. Functions as a transcriptional repressor by deubiquiting histone H2B at the promoters of genes critical for cellular differentiation, such as CDKN1A, thereby preventing histone H3 'Lys-4' trimethylation (H3K4). Specifically deubiquitinates MYC in the nucleolus, leading to prevent MYC degradation by the proteasome: acts by specifically interacting with isoform 3 of FBXW7 (FBW7gamma) in the nucleolus and counteracting ubiquitination of MYC by the SCF(FBW7) complex. In contrast, it does not interact with isoform 1 of FBXW7 (FBW7alpha) in the nucleoplasm. Interacts to and regulates the actions of E3 ubiquitin-protein ligase NEDD4L over substrates such as NTRK1, KCNQ2 and KCNQ3, affecting their expression an functions. Deubiquitinates SOD2, regulates SOD2 protein stability. Deubiquitinase activity is required to control selective autophagy activation by ubiquitinated proteins. Promotes CEP63 stabilization through 'Lys-48'-linked deubiquitination leading to increased stability. Acts as a SUMO ligase to promote EXOSC10 sumoylation critical for the nucleolar RNA exosome function in rRNA processing. Binds to pre-rRNAs. The chain is Ubiquitin carboxyl-terminal hydrolase 36 from Homo sapiens (Human).